Here is a 323-residue protein sequence, read N- to C-terminus: Serine/threonine-protein kinase-transforming protein raf (323 aa).

The Protein kinase domain occupies 24–284; sequence VMLSTRIGSG…PQILSSIELL (261 aa). Residues 30-38 and K50 contribute to the ATP site; that span reads IGSGSFGTV. The active-site Proton acceptor is the D143.

It belongs to the protein kinase superfamily. TKL Ser/Thr protein kinase family. RAF subfamily.

The enzyme catalyses L-seryl-[protein] + ATP = O-phospho-L-seryl-[protein] + ADP + H(+). The catalysed reaction is L-threonyl-[protein] + ATP = O-phospho-L-threonyl-[protein] + ADP + H(+). In Murine sarcoma virus 3611, this protein is Serine/threonine-protein kinase-transforming protein raf (V-RAF).